The chain runs to 261 residues: Proline-rich protein HaeIII subfamily 1 (261 aa).

A signal peptide spans 1–15; sequence MLVVLFTVALLALSS. Residues 15 to 261 form a disordered region; the sequence is SAQGPREENQ…PPQGRPQGPR (247 aa). 2 stretches are compositionally biased toward pro residues: residues 32–44 and 51–237; these read QRPP…PRPP and GPPP…PPTG. The span at 238–261 shows a compositional bias: low complexity; that stretch reads GPQQTPPLAGNTQGPPQGRPQGPR.

The protein resides in the secreted. The sequence is that of Proline-rich protein HaeIII subfamily 1 (Prh1) from Mus musculus (Mouse).